We begin with the raw amino-acid sequence, 353 residues long: Chloroplastic lipocalin (353 aa).

Over residues 1 to 18 (MILLSSSISLSRPVSSQS) the composition is skewed to low complexity. The tract at residues 1–27 (MILLSSSISLSRPVSSQSFSPPAATST) is disordered. Residues 1 to 39 (MILLSSSISLSRPVSSQSFSPPAATSTRRSHSSVTVKCC) constitute a chloroplast transit peptide. Residues cysteine 163 and cysteine 299 are joined by a disulfide bond.

The protein belongs to the calycin superfamily. Lipocalin family. Expressed in leaves at low levels (at protein levels). Present in seeds.

It is found in the plastid. Its subcellular location is the chloroplast thylakoid lumen. Functionally, lipocalin that prevents thylakoidal membrane lipids peroxidation and confers protection against oxidative stress, especially mediated by singlet oxygen in response to high light and other stress (e.g. heat shocks). Required for seed longevity by ensuring polyunsaturated lipids integrity. The sequence is that of Chloroplastic lipocalin from Arabidopsis thaliana (Mouse-ear cress).